Consider the following 308-residue polypeptide: Folate transporter 1, chloroplastic (308 aa).

3 Solcar repeats span residues 4-94 (SWQW…AKQR), 104-192 (LSPA…LRKI), and 213-299 (ADYA…VLKL). Transmembrane regions (helical) follow at residues 10-30 (ATAGAVAGFATVAAMHSLDVV), 74-91 (VIGSTVSWGLYFFFYGRA), 110-130 (LASAAEAGALVCLCTNPIWLV), 164-184 (ALYKGIVPGLVLVSHGAIQFT), 216-236 (AALGGSSKVAAVLLTYPFQVI), and 274-293 (GLTANLLKNVPASSITFIVY).

The protein belongs to the mitochondrial carrier (TC 2.A.29) family. In terms of tissue distribution, ubiquitous.

The protein resides in the plastid. Its subcellular location is the chloroplast membrane. Its function is as follows. Mediates folate import into chloroplast. The polypeptide is Folate transporter 1, chloroplastic (FOLT1) (Arabidopsis thaliana (Mouse-ear cress)).